Here is a 138-residue protein sequence, read N- to C-terminus: Spermatid nuclear transition protein 4 (138 aa).

The span at 1–11 (AKVSRKPREPR) shows a compositional bias: basic and acidic residues. Positions 1–138 (AKVSRKPREP…QGVTRRGRRY (138 aa)) are disordered. Ser4 bears the Phosphoserine; by PKC mark. The short motif at 5-23 (RKPREPRTAVTQSTRRIKR) is the Nuclear localization signal element. Basic residues-rich tracts occupy residues 19–34 (RRIKRKKTLSKPRSRG), 43–57 (MKIKRALRRNLRRKI), and 65–74 (KKAKKARKHF). Thr26 carries the phosphothreonine; by PKA modification. A Nuclear localization signal motif is present at residues 54–72 (RRKIQTSAGQPKKAKKARK). Residues 86–101 (NKKTNQNKRQNQNKRQ) are compositionally biased toward low complexity. Polar residues predominate over residues 120–131 (PTTSCKWCSQGV).

The protein localises to the nucleus. The protein resides in the chromosome. Functionally, involved in nuclear basic protein transition: histones are replaced by spermatid specific proteins which are themselves replaced by protamines in late spermatids. The protein is Spermatid nuclear transition protein 4 (TNP4) of Sus scrofa (Pig).